Reading from the N-terminus, the 728-residue chain is Catalase-peroxidase 1 (728 aa).

The segment at residues 91–218 is a cross-link (tryptophyl-tyrosyl-methioninium (Trp-Tyr) (with M-244)); it reads WHSAGTYRTA…LAAVQMGLIY (128 aa). The Proton acceptor role is filled by H92. Positions 218-244 form a cross-link, tryptophyl-tyrosyl-methioninium (Tyr-Met) (with W-91); that stretch reads YVNPEGPDGNPDPVAAAHDIRETFARM. Position 259 (H259) interacts with heme b.

It belongs to the peroxidase family. Peroxidase/catalase subfamily. Homodimer or homotetramer. Heme b serves as cofactor. Formation of the three residue Trp-Tyr-Met cross-link is important for the catalase, but not the peroxidase activity of the enzyme.

The enzyme catalyses H2O2 + AH2 = A + 2 H2O. The catalysed reaction is 2 H2O2 = O2 + 2 H2O. Functionally, bifunctional enzyme with both catalase and broad-spectrum peroxidase activity. This chain is Catalase-peroxidase 1, found in Burkholderia orbicola (strain MC0-3).